The chain runs to 278 residues: MYGGDFDGNAAFAGGGFMPSQATTQAHESSSSLKNRDVRTLLPLTLKQLSSASTTGESNFSIDGVDIKTVVIVGRISRMENRITQVDFVVDDGTGWVDCVRWCHARQETEEMEAVKLGMYVRLHGHLKIFQGKRSVNVFSVRPVTDFNEIVHHFTECMYVHMYNTKLRGGSITQDTATPRPQMPYSTMPTPAKPYQTGPSNQFPNQFNDSMHGVKQTVLNYLNQPMHIVSEAGVHCDIIARELRIPLLQVKEALEQLSNDGCIYSTLDETCFKSTANA.

Positions 70–143 form a DNA-binding region, OB; it reads VVIVGRISRM…RSVNVFSVRP (74 aa).

The protein belongs to the replication factor A protein 2 family. As to quaternary structure, heterotrimer of RPA1, RPA2 and RPA3 (canonical replication protein A complex). Phosphorylated in a cell-cycle-dependent manner (from the S phase until mitosis). In response to DNA damage, recruited to DNA-repair nuclear foci, as a hypophosphorylated form.

The protein localises to the nucleus. Component of the replication protein A complex (RPA) required for DNA recombination, repair and replication. The activity of RPA is mediated by single-stranded DNA binding and protein interactions. Required fo cell division in meristems. Involved in the maintenance of transcriptional epigenetic gene silencing (TGS) at specific loci (including some transposons) by regulating histone H3 acetylation, 'Lys-4' and 'Lys-9' methylation. This Arabidopsis thaliana (Mouse-ear cress) protein is Replication protein A 32 kDa subunit B (RPA2B).